We begin with the raw amino-acid sequence, 187 residues long: Structural protein ORF187 (187 aa).

A helical transmembrane segment spans residues Ile65–Ala85.

The protein localises to the host membrane. The protein resides in the virion. The polypeptide is Structural protein ORF187 (Acidianus two-tailed virus (ATV)).